A 1714-amino-acid polypeptide reads, in one-letter code: MSIKLKANLNNPPISGLATAHLINGTVPVEIVWSKEETSLQFPDNRLLVCHSNNDVLRALARAAPDYKLYGETAIERTQIDHWLSFSLTCEDDISWALSFLDKSIAPVTYLVANKLTIADFALFNEMHSRYEFLAAKGIPQHVQRWYDLITAQPLIQKVLQSLPEDAKVKRSPQSSKEQTPAKTGERKQEGKFVDLPGAEMGKVVVRFPPEASGYLHIGHAKAALLNQYYALAFQGTLIMRFDDTNPAKETVEFENVILGDLEQLQIKPDVFTHTSNYFDLMLDYCVRLIKESKAYVDDTPPEQMKLEREQRVESANRSNSVEKNLSLWEEMVKGSEKGQKYCVRAKIDMSSPNGCMRDPTIYRCKNEPHPRTGTKYKVYPTYDFACPIVDAIENVTHTLRTTEYHDRDDQFYWFIDALKLRKPYIWSYSRLNMTNTVLSKRKLTWFVDSGLVDGWDDPRFPTVRGIIRRGMTVEGLKEFIIAQGSSKSVVFMNWDKIWAFNKKVIDPIAPRYTALEKEKRVIVNVAGAKVERIQVSVHPKDESLGKKTVLLGPRIYIDYVDAEALKEGENATFINWGNILIRKVNKDASGNITSVDAALNLENKDFKKTLKLTWLAVEDDPSAYPPTFCVYFDNIISKAVLGKDEDFKQFIGHKTRDEVPMLGDPELKKCKKGDIIQLQRRGFFKVDVAYAPPSGYTNVPSPIVLFSIPDGHTKDVPTSGLKVNAPDAKATKKASSPVSSSGQASELDSQISQQGDLVRDLKSKKAAKDQIDVAVKKLLALKADYKSATGKDWKPGQTSASSAPVPAASSSSANDAVSVNASIVKQGDLVRDLKGKKASKPEIDAAVKTLLELKAQYKTLTGQDWKPGTVPTTAAPSASAAPSVGVNDSVAQILSQITAQGDKVRELKSAKADKATVDAAVKTLLSLKADYKAATGSDWKPGTTAPAPAAAPVKVKQEKNPDPASVLTVNTLLNKIAQQGDKIRQLKSAKSEKSLVEAEVKLLLALKTDYKSLTGQEWKPGTVAPAPTTVNVIDLTGGDSGSDVGSVLSKIQAQGDKIRKLKSEKAAKNVIDPEVKTLLALKGEYKTLSGKDWTPDAKSEPAVVKKEASPVSMASPAKDELTQEINAQGEKVRAAKGNKAAKEVIDAEVAKLLALKAKYKEVTGTDFPVAGRGGGGGGGSAKKAPKEAQPKPAKPVKKEPAADASGAVKKQTRLGLEATKEDNLPDWYSQVITKGEMIEYYDVSGCYILRQWSFAIWKAIKTWFDAEITRMGVKECYFPIFVSKAVLEKEKTHIADFAPEVAWVTKSGDSDLAEPIAVRPTSETVMYPAYAKWVQSYRDLPIRLNQWNNVVRWEFKQPTPFLRTREFLWQEGHTAFADKEEAAKEVLDILDLYALVYTHLLAIPVVKGRKTEKEKFAGGDYTTTVEAFISASGRAIQGATSHHLGQNFSKMFEIVYEDPETQQKKYVYQNSWGITTRTIGVMIMVHADNQGLVLPPHVACIQAIVVPCGITVNTKDDERAQLLDACKALEKRLVGGGVRCEGDYRDNYSPGWKFNHWELKGVPLRLEVGPKDLKAQQLVAVRRDTVEKITIPLADVEKKIPALLETIHESMLNKAQEDMTSHTKKVTNWTDFCGFLEQKNILLAPFCGEISCEDKIKADSARGEEAEPGAPAMGAKSLCIPFDQPAPIAASDKCINPSCTNKPKFYTLFGRSY.

The segment at 166-191 is disordered; that stretch reads DAKVKRSPQSSKEQTPAKTGERKQEG. Residues 170 to 754 are glutamate--tRNA ligase; sequence KRSPQSSKEQ…ASELDSQISQ (585 aa). The segment covering 172-182 has biased composition (polar residues); the sequence is SPQSSKEQTPA. Residues 209-220 carry the 'HIGH' region motif; sequence PPEASGYLHIGH. Positions 438-442 match the 'KMSKS' region motif; the sequence is VLSKR. 3 disordered regions span residues 718-754, 791-817, and 943-962; these read PTSG…QISQ, GKDW…ANDA, and GTTA…EKNP. Low complexity-rich tracts occupy residues 734-746 and 800-817; these read KASS…GQAS and SASS…ANDA. WHEP-TRS domains follow at residues 744 to 800, 816 to 872, 890 to 946, 969 to 1025, and 1044 to 1100; these read QASE…GQTS, DAVS…GTVP, SVAQ…GTTA, TVNT…GTVA, and DVGS…DAKS. The tract at residues 755–1201 is 6 X 57 AA approximate repeats; it reads QGDLVRDLKS…KPAKPVKKEP (447 aa). 2 disordered regions span residues 1093–1119 and 1168–1210; these read DWTP…SPAK and FPVA…GAVK. Residues 1094–1109 are compositionally biased toward basic and acidic residues; it reads WTPDAKSEPAVVKKEA. S1110 bears the Phosphoserine mark. Residues 1118 to 1174 enclose the WHEP-TRS 6 domain; that stretch reads AKDELTQEINAQGEKVRAAKGNKAAKEVIDAEVAKLLALKAKYKEVTGTDFPVAGRG. Over residues 1172–1181 the composition is skewed to gly residues; that stretch reads GRGGGGGGGS. A proline--tRNA ligase region spans residues 1207 to 1714; it reads GAVKKQTRLG…KFYTLFGRSY (508 aa). Residues 1322–1324 and R1353 contribute to the L-proline site; that span reads TSE. ATP is bound by residues R1353, E1355, R1364, T1365, Q1438, and T1441. Q1438 is a Mg(2+) binding site. H1443 lines the L-proline pocket. Residues T1476 and R1478 each coordinate ATP. Zn(2+)-binding residues include C1648, C1653, and C1695.

This sequence in the N-terminal section; belongs to the class-I aminoacyl-tRNA synthetase family. Glutamate--tRNA ligase type 2 subfamily. The protein in the C-terminal section; belongs to the class-II aminoacyl-tRNA synthetase family. In terms of assembly, component of the multisynthetase complex which is comprised of a bifunctional glutamyl-prolyl-tRNA synthetase, the monospecific isoleucyl, leucyl, glutaminyl, methionyl, lysyl, arginyl, and aspartyl-tRNA synthetases as well as three auxiliary proteins, p18, p48 and p43.

The enzyme catalyses tRNA(Glu) + L-glutamate + ATP = L-glutamyl-tRNA(Glu) + AMP + diphosphate. It carries out the reaction tRNA(Pro) + L-proline + ATP = L-prolyl-tRNA(Pro) + AMP + diphosphate. Its function is as follows. Catalyzes the attachment of both L-glutamate and L-proline to their cognate tRNAs in a two-step reaction where the amino acid is first activated by ATP to form a covalent intermediate with AMP. Subsequently, the activated amino acid is transferred to the acceptor end of the cognate tRNA to form L-glutamyl-tRNA(Glu) and L-prolyl-tRNA(Pro). The chain is Bifunctional glutamate/proline--tRNA ligase from Drosophila melanogaster (Fruit fly).